The chain runs to 396 residues: Deoxyguanosinetriphosphate triphosphohydrolase-like protein (396 aa).

In terms of domain architecture, HD spans 62-198 (RLTHSLEVAQ…AALADDIAYN (137 aa)).

Belongs to the dGTPase family. Type 2 subfamily.

This chain is Deoxyguanosinetriphosphate triphosphohydrolase-like protein, found in Jannaschia sp. (strain CCS1).